The sequence spans 181 residues: Protein Syd (181 aa).

This sequence belongs to the Syd family.

It localises to the cell inner membrane. In terms of biological role, interacts with the SecY protein in vivo. May bind preferentially to an uncomplexed state of SecY, thus functioning either as a chelating agent for excess SecY in the cell or as a regulatory factor that negatively controls the translocase function. This chain is Protein Syd, found in Salmonella arizonae (strain ATCC BAA-731 / CDC346-86 / RSK2980).